Here is a 264-residue protein sequence, read N- to C-terminus: Thymidylate synthase (264 aa).

Arginine 21 lines the dUMP pocket. Histidine 51 is a (6R)-5,10-methylene-5,6,7,8-tetrahydrofolate binding site. 126-127 (RR) lines the dUMP pocket. The active-site Nucleophile is cysteine 146. DUMP contacts are provided by residues 166–169 (RSAD), asparagine 177, and 207–209 (HLY). Residue aspartate 169 coordinates (6R)-5,10-methylene-5,6,7,8-tetrahydrofolate. Residue alanine 263 participates in (6R)-5,10-methylene-5,6,7,8-tetrahydrofolate binding.

Belongs to the thymidylate synthase family. Bacterial-type ThyA subfamily. As to quaternary structure, homodimer.

It localises to the cytoplasm. The enzyme catalyses dUMP + (6R)-5,10-methylene-5,6,7,8-tetrahydrofolate = 7,8-dihydrofolate + dTMP. Its pathway is pyrimidine metabolism; dTTP biosynthesis. In terms of biological role, catalyzes the reductive methylation of 2'-deoxyuridine-5'-monophosphate (dUMP) to 2'-deoxythymidine-5'-monophosphate (dTMP) while utilizing 5,10-methylenetetrahydrofolate (mTHF) as the methyl donor and reductant in the reaction, yielding dihydrofolate (DHF) as a by-product. This enzymatic reaction provides an intracellular de novo source of dTMP, an essential precursor for DNA biosynthesis. This Methylorubrum extorquens (strain CM4 / NCIMB 13688) (Methylobacterium extorquens) protein is Thymidylate synthase.